The chain runs to 147 residues: D-aminoacyl-tRNA deacylase (147 aa).

Positions 136–137 (GP) match the Gly-cisPro motif, important for rejection of L-amino acids motif.

Belongs to the DTD family. Homodimer.

The protein resides in the cytoplasm. It catalyses the reaction glycyl-tRNA(Ala) + H2O = tRNA(Ala) + glycine + H(+). It carries out the reaction a D-aminoacyl-tRNA + H2O = a tRNA + a D-alpha-amino acid + H(+). Functionally, an aminoacyl-tRNA editing enzyme that deacylates mischarged D-aminoacyl-tRNAs. Also deacylates mischarged glycyl-tRNA(Ala), protecting cells against glycine mischarging by AlaRS. Acts via tRNA-based rather than protein-based catalysis; rejects L-amino acids rather than detecting D-amino acids in the active site. By recycling D-aminoacyl-tRNA to D-amino acids and free tRNA molecules, this enzyme counteracts the toxicity associated with the formation of D-aminoacyl-tRNA entities in vivo and helps enforce protein L-homochirality. The sequence is that of D-aminoacyl-tRNA deacylase from Streptococcus suis (strain 98HAH33).